Consider the following 487-residue polypeptide: MRAQPTASHYVNGRYIDDEQGAPLPVIYPATGETIAMLRSATPNVLELAIEAARAAQPAWARLKPVERGRILRRAADILRARNADLARIETLDTGKAIQETLVADAPSAADCLEYFGGAVAAYNGEAVDLGGPFAYTRREALGVCVGIGAWNYPIQIAGWKSAPALAMGNAMVFKPSENTPLSALALAEIYSEAGLPDGLFNVVQGYGDVGAGLVGHDVVAKVSVTGSVPTGRKVLSLAGSKMKHATMELGGKSPLIVFDDADIENAIGGAMLGNFYSTGQICSNGTRVFVQSGIHDRFVERLVERTKKIRIGNPLDPETQMGPLVSKAQHEKVVGYIGIGKQDGAVLACGGNVPSLQGFDGGFFVEPTVFTGVTDTMRIAREEIFGPVMSVLKFDGEDEVIDRANDTEFGLAAGVFTRDLPRAHRVIAELQAGTCWINAYNLTPVEIPFGGFKQSGIGRENSLAALALYSQLKSIYVETGDVASPY.

The K(+) site is built by I27 and D93. Position 149-151 (149-151 (GAW)) interacts with NAD(+). The active-site Charge relay system is K161. NAD(+)-binding positions include 175–178 (KPSE) and 228–231 (SVPT). E249 functions as the Proton acceptor in the catalytic mechanism. Residues G251, C283, and E384 each coordinate NAD(+). C283 acts as the Nucleophile in catalysis. At C283 the chain carries Cysteine sulfenic acid (-SOH). Residues K454 and G457 each coordinate K(+). Catalysis depends on E461, which acts as the Charge relay system.

The protein belongs to the aldehyde dehydrogenase family. In terms of assembly, dimer of dimers. K(+) serves as cofactor.

It carries out the reaction betaine aldehyde + NAD(+) + H2O = glycine betaine + NADH + 2 H(+). Its pathway is amine and polyamine biosynthesis; betaine biosynthesis via choline pathway; betaine from betaine aldehyde: step 1/1. Functionally, involved in the biosynthesis of the osmoprotectant glycine betaine. Catalyzes the irreversible oxidation of betaine aldehyde to the corresponding acid. The polypeptide is Betaine aldehyde dehydrogenase (Mesorhizobium japonicum (strain LMG 29417 / CECT 9101 / MAFF 303099) (Mesorhizobium loti (strain MAFF 303099))).